Consider the following 564-residue polypeptide: O-fucosyltransferase 6 (564 aa).

A helical; Signal-anchor for type II membrane protein transmembrane segment spans residues 17–37 (LLPFICAVSGALLILFALLSI). N95 and N139 each carry an N-linked (GlcNAc...) asparagine glycan. Substrate is bound at residue 277–279 (HLR). N449 carries N-linked (GlcNAc...) asparagine glycosylation. Residues 501–512 (MDSRKFGKKEQK) are compositionally biased toward basic and acidic residues. A disordered region spans residues 501–542 (MDSRKFGKKEQKEDEDAELSSSETDYEEDQTDLQDRGLYNGT). Residues 513-532 (EDEDAELSSSETDYEEDQTD) are compositionally biased toward acidic residues. The N-linked (GlcNAc...) asparagine glycan is linked to N540.

It belongs to the glycosyltransferase GT106 family.

It localises to the membrane. The protein operates within glycan metabolism. This chain is O-fucosyltransferase 6, found in Arabidopsis thaliana (Mouse-ear cress).